Consider the following 548-residue polypeptide: Chaperonin GroEL (548 aa).

ATP is bound by residues 30-33, Lys-51, 87-91, Gly-415, and Asp-495; these read TLGP and DGTTT.

This sequence belongs to the chaperonin (HSP60) family. In terms of assembly, forms a cylinder of 14 subunits composed of two heptameric rings stacked back-to-back. Interacts with the co-chaperonin GroES.

It localises to the cytoplasm. The catalysed reaction is ATP + H2O + a folded polypeptide = ADP + phosphate + an unfolded polypeptide.. Together with its co-chaperonin GroES, plays an essential role in assisting protein folding. The GroEL-GroES system forms a nano-cage that allows encapsulation of the non-native substrate proteins and provides a physical environment optimized to promote and accelerate protein folding. This Colwellia psychrerythraea (strain 34H / ATCC BAA-681) (Vibrio psychroerythus) protein is Chaperonin GroEL.